A 92-amino-acid polypeptide reads, in one-letter code: Small ribosomal subunit protein uS19 (92 aa).

The protein belongs to the universal ribosomal protein uS19 family.

Its function is as follows. Protein S19 forms a complex with S13 that binds strongly to the 16S ribosomal RNA. In Albidiferax ferrireducens (strain ATCC BAA-621 / DSM 15236 / T118) (Rhodoferax ferrireducens), this protein is Small ribosomal subunit protein uS19.